The following is a 173-amino-acid chain: Crossover junction endodeoxyribonuclease RuvC (173 aa).

Residues Asp8, Glu67, and Asp139 contribute to the active site. 3 residues coordinate Mg(2+): Asp8, Glu67, and Asp139.

It belongs to the RuvC family. As to quaternary structure, homodimer which binds Holliday junction (HJ) DNA. The HJ becomes 2-fold symmetrical on binding to RuvC with unstacked arms; it has a different conformation from HJ DNA in complex with RuvA. In the full resolvosome a probable DNA-RuvA(4)-RuvB(12)-RuvC(2) complex forms which resolves the HJ. Mg(2+) serves as cofactor.

It is found in the cytoplasm. It catalyses the reaction Endonucleolytic cleavage at a junction such as a reciprocal single-stranded crossover between two homologous DNA duplexes (Holliday junction).. The RuvA-RuvB-RuvC complex processes Holliday junction (HJ) DNA during genetic recombination and DNA repair. Endonuclease that resolves HJ intermediates. Cleaves cruciform DNA by making single-stranded nicks across the HJ at symmetrical positions within the homologous arms, yielding a 5'-phosphate and a 3'-hydroxyl group; requires a central core of homology in the junction. The consensus cleavage sequence is 5'-(A/T)TT(C/G)-3'. Cleavage occurs on the 3'-side of the TT dinucleotide at the point of strand exchange. HJ branch migration catalyzed by RuvA-RuvB allows RuvC to scan DNA until it finds its consensus sequence, where it cleaves and resolves the cruciform DNA. The protein is Crossover junction endodeoxyribonuclease RuvC of Salmonella arizonae (strain ATCC BAA-731 / CDC346-86 / RSK2980).